The primary structure comprises 294 residues: Ribosomal protein L11 methyltransferase (294 aa).

Residues T145, G166, D188, and N227 each contribute to the S-adenosyl-L-methionine site.

This sequence belongs to the methyltransferase superfamily. PrmA family.

The protein resides in the cytoplasm. It carries out the reaction L-lysyl-[protein] + 3 S-adenosyl-L-methionine = N(6),N(6),N(6)-trimethyl-L-lysyl-[protein] + 3 S-adenosyl-L-homocysteine + 3 H(+). Methylates ribosomal protein L11. This chain is Ribosomal protein L11 methyltransferase, found in Hydrogenovibrio crunogenus (strain DSM 25203 / XCL-2) (Thiomicrospira crunogena).